An 86-amino-acid chain; its full sequence is Large ribosomal subunit protein bL27 (86 aa).

The tract at residues 1-21 (MAHKKAAGSSRNGRDSESKRL) is disordered.

This sequence belongs to the bacterial ribosomal protein bL27 family.

This chain is Large ribosomal subunit protein bL27, found in Hahella chejuensis (strain KCTC 2396).